The primary structure comprises 331 residues: DSC E3 ubiquitin ligase complex subunit D (331 aa).

N-linked (GlcNAc...) asparagine glycosylation is present at N26. Transmembrane regions (helical) follow at residues 63–83 (ILIYCELSALYYMDCSVILFA), 107–127 (PFIGAIFVSNIFCMIFHNFFT), and 159–179 (LFLLDFLVLILDLVMLGLIVE). Positions 188-225 (STTSTEILRVQDHDSEERGVHRTRPESRSSVVGAELDE) are disordered. Over residues 196-214 (RVQDHDSEERGVHRTRPES) the composition is skewed to basic and acidic residues.

Component of the DSC E3 ubiquitin ligase complex composed of dscA, dscB, dscC and dscD.

The protein localises to the endoplasmic reticulum membrane. It functions in the pathway protein modification; protein ubiquitination. Component of the DSC E3 ubiquitin ligase complex which is required for the srbA transcriptional activator proteolytic cleavage to release the soluble transcription factor from the membrane in low oxygen or sterol conditions. Required for growth during hypoxia and triazole drug susceptibility, as well as for virulence in a murine model of invasive pulmonary aspergillosis (IPA). This chain is DSC E3 ubiquitin ligase complex subunit D, found in Aspergillus fumigatus (strain ATCC MYA-4609 / CBS 101355 / FGSC A1100 / Af293) (Neosartorya fumigata).